A 311-amino-acid chain; its full sequence is Malate dehydrogenase (311 aa).

NAD(+)-binding positions include G7–G13 and D34. Residues R81 and R87 each coordinate substrate. NAD(+) contacts are provided by residues N94 and I117–N119. Substrate is bound by residues N119 and R153. Catalysis depends on H177, which acts as the Proton acceptor. M227 is a binding site for NAD(+).

This sequence belongs to the LDH/MDH superfamily. MDH type 1 family. In terms of assembly, homodimer.

It catalyses the reaction (S)-malate + NAD(+) = oxaloacetate + NADH + H(+). In terms of biological role, catalyzes the reversible oxidation of malate to oxaloacetate. The protein is Malate dehydrogenase of Histophilus somni (strain 129Pt) (Haemophilus somnus).